An 87-amino-acid chain; its full sequence is MSERNNRKVYTGKVVSDKMDKTITVVVETYKTHSLYGKRVKYSKKYKAHDENNTAKMGDIVKIMETRPLSATKRFRLVEVVEESVII.

This sequence belongs to the universal ribosomal protein uS17 family. Part of the 30S ribosomal subunit.

In terms of biological role, one of the primary rRNA binding proteins, it binds specifically to the 5'-end of 16S ribosomal RNA. The chain is Small ribosomal subunit protein uS17 from Macrococcus caseolyticus (strain JCSC5402) (Macrococcoides caseolyticum).